Reading from the N-terminus, the 406-residue chain is Zinc finger protein 793 (406 aa).

Positions 8-79 (VSFKDVVVGF…EAACPGCHCW (72 aa)) constitute a KRAB domain. 6 C2H2-type zinc fingers span residues 227–249 (HVCS…QRSH), 255–277 (YGCT…QRIH), 283–305 (FECF…QRTH), 311–333 (FVCS…RKMH), 339–361 (YRCR…WRTH), and 367–389 (YGCN…QKIH).

It belongs to the krueppel C2H2-type zinc-finger protein family.

The protein localises to the nucleus. In terms of biological role, may be involved in transcriptional regulation. The polypeptide is Zinc finger protein 793 (ZNF793) (Homo sapiens (Human)).